Here is a 156-residue protein sequence, read N- to C-terminus: Protein BUNDLE SHEATH DEFECTIVE 2, chloroplastic (156 aa).

The transit peptide at 1-41 (MNSAALNARTASVAPQPQACHACKCRQLLSRRVPPAQRQVE) directs the protein to the chloroplast. Residues cysteine 78, cysteine 81, cysteine 89, cysteine 92, cysteine 133, cysteine 136, cysteine 144, and cysteine 147 each contribute to the Zn(2+) site.

This sequence belongs to the BSD2 chaperone family. As to quaternary structure, interacts with the RuBisCo large subunit (RbcL) assembled as an intermediate complex made of eight RbcL and eight BSD2 subunits.

It localises to the plastid. The protein localises to the chloroplast stroma. Functionally, chloroplast chaperone required for RuBisCo biogenesis and translational regulation of the RuBisCo large subunit (RbcL). Stabilizes an end-state assembly intermediate of eight RbcL subunits until the small subunits (RBCSs) become available to produce a complete stable RuBisCo complex containing eight small and eight large subunits. This Chlamydomonas reinhardtii (Chlamydomonas smithii) protein is Protein BUNDLE SHEATH DEFECTIVE 2, chloroplastic.